A 514-amino-acid chain; its full sequence is Endoglucanase MaCel5A (514 aa).

Residues 1-23 (MKRILFTAGGCLFYLLLAVKAYA) form the signal peptide. Low complexity-rich tracts occupy residues 91–114 (GSSSSSSSSSSSSSGSSSSSSGSG) and 179–201 (SSSSSSGGTSSSGSSSSGVSSSG). Disordered regions lie at residues 91-118 (GSSSSSSSSSSSSSGSSSSSSGSGSSSG) and 179-208 (SSSSSSGGTSSSGSSSSGVSSSGGSSGGDS). Catalysis depends on Glu346, which acts as the Proton donor. Glu439 acts as the Nucleophile in catalysis.

It belongs to the glycosyl hydrolase 5 (cellulase A) family.

It catalyses the reaction Endohydrolysis of (1-&gt;4)-beta-D-glucosidic linkages in cellulose, lichenin and cereal beta-D-glucans.. Exhibits strong halostability and halotolerance. The activity increases about tenfold in the presence of 0.5 M NaCl, and about fivefold in the presence of 4.0 M NaCl. Tolerates detergents, but activity is decreased in the presence of EDTA. Activity is enhanced in the presence of Mn(2+), Ca(2+), Ba(2+) or Mg(2+), and decreased in the presence of Zn(2+), Cu(2+), Al(3+) or Fe(3+). In terms of biological role, endoglucanase that exhibits highest activity toward barley beta-glucan, lower activity toward carboxymethyl cellulose (CMC-Na), and marginal activity toward laminarin and xylan. This Microbulbifer sp. (strain ALW1) protein is Endoglucanase MaCel5A.